The primary structure comprises 554 residues: Arginine--tRNA ligase (554 aa).

The short motif at 129-139 (ANPTGPLHIGH) is the 'HIGH' region element.

The protein belongs to the class-I aminoacyl-tRNA synthetase family. Monomer.

The protein localises to the cytoplasm. The catalysed reaction is tRNA(Arg) + L-arginine + ATP = L-arginyl-tRNA(Arg) + AMP + diphosphate. The sequence is that of Arginine--tRNA ligase from Geobacter sp. (strain M21).